Reading from the N-terminus, the 974-residue chain is Short transient receptor potential channel 5 (974 aa).

Residues 1–325 (MAQLYYKKVN…YDGFPGWRRK (325 aa)) lie on the Cytoplasmic side of the membrane. 4 ANK repeats span residues 30-60 (SAEEKAFLNAVEKGDYATVKQALQEAEIYYN), 69-97 (LGRSALLIAIENENLEIMELLLNHSVYVG), 98-124 (DALLYAIRKEVVGAVELLLSYRKPSGE), and 141-170 (PDITPIMLAAHTNNYEIIKLLVQKRVTIPR). Zn(2+) is bound by residues His-172, Cys-176, Cys-178, and Cys-181. Residues 326–360 (HWVVKLLTCMTIGFLFPMLSIAYLISPRSNLGLFI) constitute an intramembrane region (discontinuously helical). Topologically, residues 361-363 (KKP) are cytoplasmic. The helical transmembrane segment at 364 to 384 (FIKFICHTASYLTFLFMLLLA) threads the bilayer. Over 385-404 (SQHIVRTDLHVQGPPPTVVE) the chain is Extracellular. Residues 405–419 (WMILPWVLGFIWGEI) traverse the membrane as a helical segment. Residues Glu-418, Glu-421, Asn-436, and Asp-439 each contribute to the Ca(2+) site. Topologically, residues 420-433 (KEMWDGGFTEYIHD) are cytoplasmic. The helical transmembrane segment at 434-454 (WWNLMDFAMNSLYLATISLKI) threads the bilayer. The Extracellular portion of the chain corresponds to 455-476 (VAYVKYNGSRPREEWEMWHPTL). Asn-461 is a glycosylation site (N-linked (GlcNAc...) asparagine). Residues 477 to 497 (IAEALFAISNILSSLRLISLF) traverse the membrane as a helical segment. Residues 498–512 (TANSHLGPLQISLGR) lie on the Cytoplasmic side of the membrane. The chain crosses the membrane as a helical span at residues 513 to 535 (MLLDILKFLFIYCLVLLAFANGL). Topologically, residues 536 to 603 (NQLYFYYETR…HEFTEFVGAT (68 aa)) are extracellular. The cysteines at positions 553 and 558 are disulfide-linked. The chain crosses the membrane as a helical span at residues 604-624 (MFGTYNVISLVVLLNMLIAMM). The Cytoplasmic portion of the chain corresponds to 625–974 (NNSYQLIADH…GQEEQVTTRL (350 aa)). 2 disordered regions span residues 766–795 (QPRRSLSTSSTELSQRDDTNDGSGGARAKS) and 811–838 (GPPLIRTMPRASGAQGKSKAESSSKRSF). Residues 769–778 (RSLSTSSTEL) show a composition bias toward low complexity. The tract at residues 972–974 (TRL) is essential for binding to NHERF1 PDZ domain.

This sequence belongs to the transient receptor (TC 1.A.4) family. STrpC subfamily. TRPC5 sub-subfamily. As to quaternary structure, homotetramer. Heterotetramer with TRPC1 and/or TRPC4. Each subunit in the homomeric ion channel (via ANK repeats) interacts with one copy of GTP-bound GNAI3; the interaction is direct and activates the ion channel. Interacts with TRPC4AP. Interacts with NHERF1. Interacts with MX1 and RNF24. Interacts (via C-terminus) with CABP1. Interacts with SESTD1 (via the spectrin 1 repeat). Interacts with PLSCR1. Interacts with PKD2L2. As to expression, expressed in brain.

It localises to the cell membrane. It catalyses the reaction Ca(2+)(in) = Ca(2+)(out). Activated by G-protein coupled receptors via direct interaction with GTP-bound GNAI3, which increases the channel sensitivity to phosphatidylinositol bisphosphate. May be activated by intracellular calcium store depletion. Calcium channel activity is enhanced by MYLK, that promotes its subcellular localization at the plasma membrane. Forms a receptor-activated non-selective calcium permeant cation channel. Mediates calcium-dependent phosphatidylserine externalization and apoptosis in neurons via its association with PLSCR1. Acts on distinct neuronal populations in the hypothalamus to regulate innate behaviors including feeding, anxiety (flight/fight/fear), socialization and maternal care. This Oryctolagus cuniculus (Rabbit) protein is Short transient receptor potential channel 5 (TRPC5).